Reading from the N-terminus, the 361-residue chain is Flagellar P-ring protein (361 aa).

An N-terminal signal peptide occupies residues 1-18; sequence MRKFTILLMLLLASSAQA.

It belongs to the FlgI family. The basal body constitutes a major portion of the flagellar organelle and consists of four rings (L,P,S, and M) mounted on a central rod.

It localises to the periplasm. The protein resides in the bacterial flagellum basal body. Its function is as follows. Assembles around the rod to form the L-ring and probably protects the motor/basal body from shearing forces during rotation. The protein is Flagellar P-ring protein of Vibrio cholerae serotype O1 (strain ATCC 39541 / Classical Ogawa 395 / O395).